We begin with the raw amino-acid sequence, 124 residues long: Small ribosomal subunit protein uS12cz/uS12cy (124 aa).

This sequence belongs to the universal ribosomal protein uS12 family. Part of the 30S ribosomal subunit.

Its subcellular location is the plastid. With S4 and S5 plays an important role in translational accuracy. Located at the interface of the 30S and 50S subunits. The protein is Small ribosomal subunit protein uS12cz/uS12cy (rps12-A) of Epifagus virginiana (Beechdrops).